Here is a 156-residue protein sequence, read N- to C-terminus: uncharacterized protein (156 aa).

3 helical membrane-spanning segments follow: residues 21 to 41 (GVLF…AISL), 54 to 74 (TICS…IDFA), and 80 to 100 (SVLV…WALF).

The protein localises to the membrane. This is an uncharacterized protein from Saccharomyces cerevisiae (strain ATCC 204508 / S288c) (Baker's yeast).